Reading from the N-terminus, the 265-residue chain is MDFKYTEEKEMIKINNIMIHKYTVLYTSNCIMDIYSEEEKITCFSNRLVFLERGVNISVRIQKKILSERPYVAFRLNGDILRHLKNALMIIYGMSKVDTNDCRGMSRKIMTTEVNKTLLDELKNINSHDDSAFISSLIYLISKIENNEKIIESIYISSVSFFSDKVRNVIEKDLSRKWTLGIIADAFNVSEITIRKRLESENTNFNQILMQLRMSKAALLLLENSYQISQISNMIGISSASYFIRVFNKHYGVTPKQFFTYFKGG.

The HTH araC/xylS-type domain maps to 164–261; sequence DKVRNVIEKD…GVTPKQFFTY (98 aa). DNA-binding regions (H-T-H motif) lie at residues 181–202 and 228–251; these read GIIADAFNVSEITIRKRLESEN and ISQISNMIGISSASYFIRVFNKHY.

Homodimer.

Transcriptional activator of the CFA/I adhesin (cfaA and cfaB) genes of enterotoxigenic E.coli at 37 degrees Celsius. Also represses the silencing effect of H-NS (hns). The sequence is that of HTH-type transcriptional activator CfaD from Escherichia coli.